Reading from the N-terminus, the 254-residue chain is MPDFSMRQLLEAGVHFGHQTHRWNPKMAPFIYGERNNIHILDLSQTVPLLNSALKVVSDTVARGGRVLFVGTKRQASDIIADAANRSAQYYVNARWLGGMMTNWKTISNSIQRLRKLDELLAGEAQGFTKKERLNLEREREKLDRTLGGIKDMGSVPDLMFIIDTNKEAIAIQEAKRLGIPVVAVIDSNCDPDQIDYPIPGNDDAARAIALYCDLIARAALDGIARQQGAMGIDVGAQVEAPVEPALQAPAEGA.

It belongs to the universal ribosomal protein uS2 family.

In Brucella ovis (strain ATCC 25840 / 63/290 / NCTC 10512), this protein is Small ribosomal subunit protein uS2.